Consider the following 452-residue polypeptide: Adenylosuccinate synthetase (452 aa).

GTP-binding positions include 40 to 46 (GDEGKGK) and 68 to 70 (GHT). D41 functions as the Proton acceptor in the catalytic mechanism. Positions 41 and 68 each coordinate Mg(2+). IMP contacts are provided by residues 41 to 44 (DEGK), 66 to 69 (NAGH), T158, R172, N250, T265, and R329. Catalysis depends on H69, which acts as the Proton donor. 325 to 331 (VTTKRKR) lines the substrate pocket. GTP is bound by residues R331, 357–359 (KLD), and 440–442 (GVG).

The protein belongs to the adenylosuccinate synthetase family. Homodimer. Mg(2+) is required as a cofactor.

The protein resides in the cytoplasm. The enzyme catalyses IMP + L-aspartate + GTP = N(6)-(1,2-dicarboxyethyl)-AMP + GDP + phosphate + 2 H(+). Its pathway is purine metabolism; AMP biosynthesis via de novo pathway; AMP from IMP: step 1/2. Its function is as follows. Plays an important role in the de novo pathway and in the salvage pathway of purine nucleotide biosynthesis. Catalyzes the first committed step in the biosynthesis of AMP from IMP. This Drosophila grimshawi (Hawaiian fruit fly) protein is Adenylosuccinate synthetase.